A 453-amino-acid chain; its full sequence is MNLFLAGLDHTTAPVEIREQLAFSQTDLPSALLQLTQADNGSPPLFTEAVILSTCNRVEIYGVANPGTTAQHVVDFLANFHRRPAGSFVHTLYFYQGEAVARHLCATAAGLRSLVLGEAQIQGQVRSAYEAAQRIGSVGSVLHRLFQIALVAGKRVRHETTIGKGAASVSQAGVELARRRLGDLRGREVLLIGGGEVSELAAQNLIANGADRLTIVNRTSSRAAALAERYGAEMLDFGALPEALARADIVISSTAAPVPIIYRHHIAEALSHKQRMRACGDCDPPAMLLIDLAVPRDIAADVAELPGVYLFTVDDLREVVSHTIELRSAVIDIANQIVEEQVREFSDWLRTQEALPVLTMLRQRAEEVRNEELTRALRRLHDLSPEQRAVIEGLSRSIVNKLLHPPTRCLREAAAHGQGKRYATMLAELFNLEHALEHKAGAMGNTELTDRMR.

Residues 54-57 (TCNR), Ser-113, 118-120 (EAQ), and Gln-124 each bind substrate. Cys-55 (nucleophile) is an active-site residue. Residue 193-198 (GGGEVS) coordinates NADP(+).

The protein belongs to the glutamyl-tRNA reductase family. Homodimer.

It catalyses the reaction (S)-4-amino-5-oxopentanoate + tRNA(Glu) + NADP(+) = L-glutamyl-tRNA(Glu) + NADPH + H(+). It participates in porphyrin-containing compound metabolism; protoporphyrin-IX biosynthesis; 5-aminolevulinate from L-glutamyl-tRNA(Glu): step 1/2. Its pathway is porphyrin-containing compound metabolism; chlorophyll biosynthesis. Its function is as follows. Catalyzes the NADPH-dependent reduction of glutamyl-tRNA(Glu) to glutamate 1-semialdehyde (GSA). In Chloroflexus aggregans (strain MD-66 / DSM 9485), this protein is Glutamyl-tRNA reductase.